Consider the following 488-residue polypeptide: MKNSVQLITYVDRLSGGGFPELRALLDGRLQGLFGGVHALPFFNPIDGADAGFDPTDHTIVDPRLGSWDDVRALAGSVEIMADLIVNHVSAQSSWFQDFIAKGSDSEFADMFMTFGKAFPRGASEQDLLNIYRPRLGCRFQRPRLQIGSQRMLWTTFTPQQIDIDVHSAHGALYLETILDRFAEANVTAIRLDAAGYAIKKAGTSCFMIDETYAFLAKLAEKARDRGMEVLVEIHSYYRDQIEIASKVDRVYDFALPPLILHSLFTGDATALARWLEISPHNAITVLDTHDGIGVIDVGAHSDGRPGLLEPQAIDHLVEEIHRRSEGQSRLATGAAASNLDLYQVNCTYYDALGRNDDDYLIARAIQFFAPGIPQVYYVGLLGGINDMELLGKTGVGRDINRHFYEDREIDLALESPLVKRLSDLIRFRNTHPAFNGSFEVATDDTGSLVLSWNLNTEFAQLVVSFSQGKATITASGCYDFTFSGAIA.

Sucrose is bound by residues Asp50, His88, 191–193 (RLD), Glu233, 290–291 (HD), 341–344 (DLYQ), and Arg398. Asp193 (nucleophile) is an active-site residue. The Proton donor role is filled by Glu233.

Belongs to the glycosyl hydrolase 13 family. Sucrose phosphorylase subfamily.

It catalyses the reaction sucrose + phosphate = D-fructose + alpha-D-glucose 1-phosphate. This Agrobacterium vitis (Rhizobium vitis) protein is Sucrose phosphorylase.